The following is a 166-amino-acid chain: Large ribosomal subunit protein uL10 (166 aa).

It belongs to the universal ribosomal protein uL10 family. In terms of assembly, part of the ribosomal stalk of the 50S ribosomal subunit. The N-terminus interacts with L11 and the large rRNA to form the base of the stalk. The C-terminus forms an elongated spine to which L12 dimers bind in a sequential fashion forming a multimeric L10(L12)X complex.

Forms part of the ribosomal stalk, playing a central role in the interaction of the ribosome with GTP-bound translation factors. This chain is Large ribosomal subunit protein uL10, found in Flavobacterium psychrophilum (strain ATCC 49511 / DSM 21280 / CIP 103535 / JIP02/86).